The sequence spans 333 residues: Uroporphyrinogen decarboxylase (333 aa).

Residues 22–26, Asp-71, Tyr-145, Ser-200, and His-310 contribute to the substrate site; that span reads RQAGR.

The protein belongs to the uroporphyrinogen decarboxylase family. In terms of assembly, homodimer.

It localises to the cytoplasm. The enzyme catalyses uroporphyrinogen III + 4 H(+) = coproporphyrinogen III + 4 CO2. It participates in porphyrin-containing compound metabolism; protoporphyrin-IX biosynthesis; coproporphyrinogen-III from 5-aminolevulinate: step 4/4. Its function is as follows. Catalyzes the decarboxylation of four acetate groups of uroporphyrinogen-III to yield coproporphyrinogen-III. This is Uroporphyrinogen decarboxylase from Thermoplasma acidophilum (strain ATCC 25905 / DSM 1728 / JCM 9062 / NBRC 15155 / AMRC-C165).